We begin with the raw amino-acid sequence, 441 residues long: MELICIGLSHRTAPLTVRERLALPESRQVDVLQRLAQAPVEALWVSTCNRVEVYLFAPDAAMARQRALMELQVLGGVEALEHLYEHQGEAALVHLFRVACSLDSMVLGEAQILGQVKEAFERGQGAGAVRGELMRACAAAFSCAKRVRTETAIGRAATSMAAAAVQLASKVFDGLAGKTVLVVGAGEMGELAARHLKQAGASKLYVTNRTLSRAEALAAEVGGQARPFEELLGLVAAADVVVCSTASQAPLFTRDNVGALGRGRRGRPLFMVDLAVPRDIDPAVGTLDWVHAYDVDDIQKFVADNAAARAEEAQKAGVLVAQEVARFVKERALREGTPVLARLRQRAEAIARSEVERTLGALGDGLNEKQRKSIEAMGRAIVNKLLHEPTARLRAVGPEGEGNRLAGAAAELFGLLEEEVGTAAAAPSVMAAPVQVATGGK.

Substrate-binding positions include 47–50, S104, 109–111, and Q115; these read TCNR and EAQ. C48 functions as the Nucleophile in the catalytic mechanism. 184-189 is a binding site for NADP(+); that stretch reads GAGEMG.

Belongs to the glutamyl-tRNA reductase family. As to quaternary structure, homodimer.

The enzyme catalyses (S)-4-amino-5-oxopentanoate + tRNA(Glu) + NADP(+) = L-glutamyl-tRNA(Glu) + NADPH + H(+). It functions in the pathway porphyrin-containing compound metabolism; protoporphyrin-IX biosynthesis; 5-aminolevulinate from L-glutamyl-tRNA(Glu): step 1/2. Catalyzes the NADPH-dependent reduction of glutamyl-tRNA(Glu) to glutamate 1-semialdehyde (GSA). In Myxococcus xanthus (strain DK1622), this protein is Glutamyl-tRNA reductase.